A 489-amino-acid chain; its full sequence is Cysteine--tRNA ligase (489 aa).

Cysteine 27 contributes to the Zn(2+) binding site. The 'HIGH' region signature appears at 29–39 (VTVYDLCHLGH). Residues cysteine 211, histidine 236, and glutamate 240 each contribute to the Zn(2+) site. The short motif at 268 to 272 (KMSKS) is the 'KMSKS' region element. Residue lysine 271 participates in ATP binding.

Belongs to the class-I aminoacyl-tRNA synthetase family. In terms of assembly, monomer. Requires Zn(2+) as cofactor.

The protein resides in the cytoplasm. The enzyme catalyses tRNA(Cys) + L-cysteine + ATP = L-cysteinyl-tRNA(Cys) + AMP + diphosphate. In Prochlorococcus marinus (strain AS9601), this protein is Cysteine--tRNA ligase.